We begin with the raw amino-acid sequence, 346 residues long: Probable RNA methyltransferase PSPA7_3453 (346 aa).

Catalysis depends on Glu-91, which acts as the Proton acceptor. Positions Leu-94–Asp-320 constitute a Radical SAM core domain. A disulfide bond links Cys-101 and Cys-325. Positions 108, 112, and 115 each coordinate [4Fe-4S] cluster. S-adenosyl-L-methionine-binding positions include Gly-153–Glu-154, Ser-183, Ser-206–His-208, and Asn-282. The S-methylcysteine intermediate role is filled by Cys-325.

This sequence belongs to the radical SAM superfamily. RlmN family. The cofactor is [4Fe-4S] cluster.

Its subcellular location is the cytoplasm. This Pseudomonas paraeruginosa (strain DSM 24068 / PA7) (Pseudomonas aeruginosa (strain PA7)) protein is Probable RNA methyltransferase PSPA7_3453.